Here is a 507-residue protein sequence, read N- to C-terminus: Histidine ammonia-lyase (507 aa).

Residues 141-143 (ASG) constitute a cross-link (5-imidazolinone (Ala-Gly)). 2,3-didehydroalanine (Ser) is present on serine 142.

This sequence belongs to the PAL/histidase family. Post-translationally, contains an active site 4-methylidene-imidazol-5-one (MIO), which is formed autocatalytically by cyclization and dehydration of residues Ala-Ser-Gly.

The protein localises to the cytoplasm. The catalysed reaction is L-histidine = trans-urocanate + NH4(+). Its pathway is amino-acid degradation; L-histidine degradation into L-glutamate; N-formimidoyl-L-glutamate from L-histidine: step 1/3. In Cereibacter sphaeroides (strain ATCC 17023 / DSM 158 / JCM 6121 / CCUG 31486 / LMG 2827 / NBRC 12203 / NCIMB 8253 / ATH 2.4.1.) (Rhodobacter sphaeroides), this protein is Histidine ammonia-lyase.